The following is a 694-amino-acid chain: Probable metal-nicotianamine transporter YSL8 (694 aa).

Transmembrane regions (helical) follow at residues 38–58, 62–82, 110–130, 154–174, 215–235, 265–285, 319–339, 393–413, 421–441, 467–487, 506–526, 567–587, 608–628, and 643–663; these read ITVR…FIVM, LTSG…FFLM, CVIS…ILGM, LGRL…SIVP, ILFK…FYAA, VGVG…GSVV, VFIS…SIVL, IAAA…PHIF, VVWA…GTGL, GGVV…STAS, MFVS…MVFW, LRFC…KEVA, FFLG…LFLW, and VASG…ILSL.

Belongs to the YSL (TC 2.A.67.2) family. As to expression, expressed in root epidermis and exoderm.

Its subcellular location is the membrane. Functionally, may be involved in the transport of nicotianamine-chelated metals. This Oryza sativa subsp. japonica (Rice) protein is Probable metal-nicotianamine transporter YSL8 (YSL8).